A 197-amino-acid chain; its full sequence is FMN-dependent NADH:quinone oxidoreductase (197 aa).

FMN is bound by residues Ser10, 16–18, 93–96, and 137–140; these read SQS, MYNF, and TRGG.

The protein belongs to the azoreductase type 1 family. Homodimer. FMN serves as cofactor.

It catalyses the reaction 2 a quinone + NADH + H(+) = 2 a 1,4-benzosemiquinone + NAD(+). The enzyme catalyses N,N-dimethyl-1,4-phenylenediamine + anthranilate + 2 NAD(+) = 2-(4-dimethylaminophenyl)diazenylbenzoate + 2 NADH + 2 H(+). Its function is as follows. Quinone reductase that provides resistance to thiol-specific stress caused by electrophilic quinones. Functionally, also exhibits azoreductase activity. Catalyzes the reductive cleavage of the azo bond in aromatic azo compounds to the corresponding amines. The chain is FMN-dependent NADH:quinone oxidoreductase from Shewanella loihica (strain ATCC BAA-1088 / PV-4).